A 332-amino-acid chain; its full sequence is Ribose-phosphate pyrophosphokinase (332 aa).

Residues 43–45 and 102–103 each bind ATP; these read DGE and RQ. Mg(2+) is bound by residues His-136 and Asp-176. The active site involves Lys-199. D-ribose 5-phosphate contacts are provided by residues Arg-201, Asp-225, and 229-233; that span reads DTGGT.

The protein belongs to the ribose-phosphate pyrophosphokinase family. Class I subfamily. In terms of assembly, homohexamer. Mg(2+) serves as cofactor.

The protein localises to the cytoplasm. It carries out the reaction D-ribose 5-phosphate + ATP = 5-phospho-alpha-D-ribose 1-diphosphate + AMP + H(+). The protein operates within metabolic intermediate biosynthesis; 5-phospho-alpha-D-ribose 1-diphosphate biosynthesis; 5-phospho-alpha-D-ribose 1-diphosphate from D-ribose 5-phosphate (route I): step 1/1. In terms of biological role, involved in the biosynthesis of the central metabolite phospho-alpha-D-ribosyl-1-pyrophosphate (PRPP) via the transfer of pyrophosphoryl group from ATP to 1-hydroxyl of ribose-5-phosphate (Rib-5-P). The sequence is that of Ribose-phosphate pyrophosphokinase from Mycoplasma genitalium (strain ATCC 33530 / DSM 19775 / NCTC 10195 / G37) (Mycoplasmoides genitalium).